We begin with the raw amino-acid sequence, 323 residues long: Acetylglutamate kinase (323 aa).

Residues 90–91 (GG), arginine 112, and asparagine 218 contribute to the substrate site.

Belongs to the acetylglutamate kinase family. ArgB subfamily.

It localises to the cytoplasm. The enzyme catalyses N-acetyl-L-glutamate + ATP = N-acetyl-L-glutamyl 5-phosphate + ADP. It functions in the pathway amino-acid biosynthesis; L-arginine biosynthesis; N(2)-acetyl-L-ornithine from L-glutamate: step 2/4. In terms of biological role, catalyzes the ATP-dependent phosphorylation of N-acetyl-L-glutamate. The protein is Acetylglutamate kinase of Ehrlichia canis (strain Jake).